The following is a 226-amino-acid chain: Ribonuclease 3 (226 aa).

The RNase III domain maps to 6-128 (INRLQRKLGY…LIGGIFLDSD (123 aa)). Glu41 contacts Mg(2+). Asp45 is an active-site residue. 2 residues coordinate Mg(2+): Asp114 and Glu117. Residue Glu117 is part of the active site. One can recognise a DRBM domain in the interval 155–225 (DPKTRLQEYL…AEQALKQLEL (71 aa)).

This sequence belongs to the ribonuclease III family. Homodimer. It depends on Mg(2+) as a cofactor.

Its subcellular location is the cytoplasm. It catalyses the reaction Endonucleolytic cleavage to 5'-phosphomonoester.. Its function is as follows. Digests double-stranded RNA. Involved in the processing of primary rRNA transcript to yield the immediate precursors to the large and small rRNAs (23S and 16S). Processes some mRNAs, and tRNAs when they are encoded in the rRNA operon. Processes pre-crRNA and tracrRNA of type II CRISPR loci if present in the organism. The protein is Ribonuclease 3 of Yersinia enterocolitica serotype O:8 / biotype 1B (strain NCTC 13174 / 8081).